A 171-amino-acid polypeptide reads, in one-letter code: SWR1 complex subunit 6 (171 aa).

The tract at residues 63–87 (DEDDDLGYLQKKQHKGSKRKTRQAK) is disordered. The segment covering 73 to 85 (KKQHKGSKRKTRQ) has biased composition (basic residues). Positions 134, 137, 145, 148, 153, 157, 161, and 166 each coordinate Zn(2+). The segment at 134–166 (CSVCGYIAGYNCCLCGMRFCSIRCQNIHKDTRC) adopts an HIT-type zinc-finger fold.

This sequence belongs to the ZNHIT1 family. Homodimer. Component of the SWR1 chromatin-remodeling complex composed of at least ARP6/ESD1/SUF3, PIE1, SWC6, SWC2 and H2AZs (HTA8, HTA9, HTA11). Interacts directly with ARP6, PIE1 and SWC2. Interacts with FLX and SUF4, two component of the transcription activator complex FRI-C, and with ASHH2 and TAF14. Expressed in root, lateral root primordia, shoot apex, leaves, stems, inflorescences, flowers, axillary buds, developing siliques and premature seeds.

The protein localises to the nucleus speckle. It localises to the nucleus. Component of the SWR1 complex which mediates the ATP-dependent exchange of histone H2A for the H2A variant H2A.F/Z leading to transcriptional regulation of selected genes (e.g. FLC) by chromatin remodeling. Coodinates SWR1-C, FRI-C (FLC transcription activator complex), histone methyltransferase and general transcription factors. Represses flowering by positively regulating FLC and MAF4. Binds to the promoter region of FLC chromatin. The protein is SWR1 complex subunit 6 (SWC6) of Arabidopsis thaliana (Mouse-ear cress).